Here is a 197-residue protein sequence, read N- to C-terminus: ADP-ribosylation factor-like protein 6-interacting protein 1 (197 aa).

4 helical membrane passes run 43–63, 64–84, 129–149, and 150–170; these read VVFGVISCLYLVLWYLDLSLI, TLLSLLGVISILLNYAFPMVS, TVFVIVMSLGLLAMAWIGAII, and NNLLLMYLATLLILMWPGLQN.

It belongs to the ARL6ip family.

Its subcellular location is the membrane. The chain is ADP-ribosylation factor-like protein 6-interacting protein 1 from Drosophila melanogaster (Fruit fly).